Consider the following 178-residue polypeptide: ATP-dependent protease subunit HslV (178 aa).

T7 is an active-site residue. Na(+)-binding residues include G162, C165, and T168.

The protein belongs to the peptidase T1B family. HslV subfamily. As to quaternary structure, a double ring-shaped homohexamer of HslV is capped on each side by a ring-shaped HslU homohexamer. The assembly of the HslU/HslV complex is dependent on binding of ATP.

The protein localises to the cytoplasm. It catalyses the reaction ATP-dependent cleavage of peptide bonds with broad specificity.. Allosterically activated by HslU binding. Functionally, protease subunit of a proteasome-like degradation complex believed to be a general protein degrading machinery. This chain is ATP-dependent protease subunit HslV, found in Burkholderia vietnamiensis (strain G4 / LMG 22486) (Burkholderia cepacia (strain R1808)).